The chain runs to 1222 residues: ATP-dependent helicase/nuclease subunit A (1222 aa).

In terms of domain architecture, UvrD-like helicase ATP-binding spans 39–495 (QKRTAQQIEA…ILLKENFRSQ (457 aa)). 60–67 (ASAGSGKT) serves as a coordination point for ATP. One can recognise a UvrD-like helicase C-terminal domain in the interval 524–810 (QLIAGSHAQT…NLMTIHKSKG (287 aa)).

Belongs to the helicase family. AddA subfamily. Heterodimer of AddA and AddB/RexB. It depends on Mg(2+) as a cofactor.

The enzyme catalyses Couples ATP hydrolysis with the unwinding of duplex DNA by translocating in the 3'-5' direction.. It catalyses the reaction ATP + H2O = ADP + phosphate + H(+). In terms of biological role, the heterodimer acts as both an ATP-dependent DNA helicase and an ATP-dependent, dual-direction single-stranded exonuclease. Recognizes the chi site generating a DNA molecule suitable for the initiation of homologous recombination. The AddA nuclease domain is required for chi fragment generation; this subunit has the helicase and 3' -&gt; 5' nuclease activities. The polypeptide is ATP-dependent helicase/nuclease subunit A (Streptococcus pyogenes serotype M4 (strain MGAS10750)).